Here is a 466-residue protein sequence, read N- to C-terminus: tRNA(Ile)-lysidine synthase (466 aa).

ATP is bound at residue serine 42 to serine 47.

Belongs to the tRNA(Ile)-lysidine synthase family.

The protein resides in the cytoplasm. The catalysed reaction is cytidine(34) in tRNA(Ile2) + L-lysine + ATP = lysidine(34) in tRNA(Ile2) + AMP + diphosphate + H(+). In terms of biological role, ligates lysine onto the cytidine present at position 34 of the AUA codon-specific tRNA(Ile) that contains the anticodon CAU, in an ATP-dependent manner. Cytidine is converted to lysidine, thus changing the amino acid specificity of the tRNA from methionine to isoleucine. In Anaplasma marginale (strain St. Maries), this protein is tRNA(Ile)-lysidine synthase.